The sequence spans 304 residues: MKEEETTYHVPVLLKESVDAMNISPDGTYVDVTFGGGGHSREILSRLGDGGRLLGFDQDEDAERNIVNDPHFTFVRSNFRYLHNFLRYHDIGEVDAILADLGVSSHHFDDSERGFSFRFDGKLDMRMNKRAGITAADVVNTYEEERLADIFYLYGELKNSRKLASVIVKARTGQKIETIGEFLEIIKPLFGREREKKELAKVFQALRIEVNQEMEALKEMLMAATEALKPGGRLVVITYHSLEDRMVKNIMKTGNVEGKATQDFFGNLQTPFRLVNNKVIVPDEDEITRNPRSRSAKLRIAEKK.

Residues 37-39 (GGH), Asp-57, Phe-79, Asp-100, and His-107 contribute to the S-adenosyl-L-methionine site.

It belongs to the methyltransferase superfamily. RsmH family.

It localises to the cytoplasm. It catalyses the reaction cytidine(1402) in 16S rRNA + S-adenosyl-L-methionine = N(4)-methylcytidine(1402) in 16S rRNA + S-adenosyl-L-homocysteine + H(+). In terms of biological role, specifically methylates the N4 position of cytidine in position 1402 (C1402) of 16S rRNA. The polypeptide is Ribosomal RNA small subunit methyltransferase H (Bacteroides fragilis (strain YCH46)).